The following is a 597-amino-acid chain: MSKPSLDLQILTLPDNPGVYQYYDKDGKILYVGKAKNLKKRVSSYFNKIHDTAKTNVLVKKIVTIKHIVVPTETDALLLENNLIKTLQPRYNVLLRDDKSYPWICIKKEPFSRIFLTRRMVKDGSEYFGPYTNFKMVYTILDLIKELYPLRTCNYDLSQSNIDSGKFKVCLEYHIGNCKGPCEGLEPLEEYQRQVNAIREILKGNFKESLKDFKKLMNNYAQNLQFEEAQKIKEKIEVLENYQSRSTIVNPKITNIDVFSIISDESAAYVNFLQISHGSIIRSHTLEMKKKLDESDEELLELAIIELRERFQLMSKEIIVPFEIDLGENIKTTVPQLGDKKQILDLSIRNAKFYRIEQLKQLQIVDPDRHVNRIMAQMQKDLRLPVEPRHIECFDNSNIQGTNPVAACVVFKDGKPSKKDYRHFNVKTVEGPDDFASMTEIVYRRYKRLLDENQPLPQLIIIDGGKGQLSSALKSIDELGLRGKVAIIGIAKRLEELFYPGDSIPLYLDKKSETLKVIQQLRNEAHRFGITFHRDKRSKAALNSSVESIPGIGEKTMLTLIQHFKSVKRLKLATEKEISAVVGVSKAKKIVDFYKTN.

The GIY-YIG domain occupies Asp15–Val93. Residues Lys207–Tyr242 enclose the UVR domain.

This sequence belongs to the UvrC family. Interacts with UvrB in an incision complex.

It is found in the cytoplasm. Functionally, the UvrABC repair system catalyzes the recognition and processing of DNA lesions. UvrC both incises the 5' and 3' sides of the lesion. The N-terminal half is responsible for the 3' incision and the C-terminal half is responsible for the 5' incision. The polypeptide is UvrABC system protein C (Flavobacterium johnsoniae (strain ATCC 17061 / DSM 2064 / JCM 8514 / BCRC 14874 / CCUG 350202 / NBRC 14942 / NCIMB 11054 / UW101) (Cytophaga johnsonae)).